Here is a 139-residue protein sequence, read N- to C-terminus: Small ribosomal subunit protein uS12 (139 aa).

Disordered stretches follow at residues 1–22 (MPTINQLVRKGRKSHKGKSKSP) and 37–57 (KTPSPQKRGVATRVGTMTPKK). Positions 9–19 (RKGRKSHKGKS) are enriched in basic residues. D102 carries the post-translational modification 3-methylthioaspartic acid.

The protein belongs to the universal ribosomal protein uS12 family. Part of the 30S ribosomal subunit. Contacts proteins S8 and S17. May interact with IF1 in the 30S initiation complex.

In terms of biological role, with S4 and S5 plays an important role in translational accuracy. Interacts with and stabilizes bases of the 16S rRNA that are involved in tRNA selection in the A site and with the mRNA backbone. Located at the interface of the 30S and 50S subunits, it traverses the body of the 30S subunit contacting proteins on the other side and probably holding the rRNA structure together. The combined cluster of proteins S8, S12 and S17 appears to hold together the shoulder and platform of the 30S subunit. The protein is Small ribosomal subunit protein uS12 of Limosilactobacillus reuteri (strain DSM 20016) (Lactobacillus reuteri).